Reading from the N-terminus, the 183-residue chain is MDLLIRLGFLLMCALPTPGERSSRDPKTLLSLSPRQQACVPRTKSHRPVCYNDTGDCTDADDSWKQLGEDFAHQCLQAAKKRPKTHKSRPNDRNLEGRLTCQRVRRLLPCDLDIHPSHRLLTLMNNCVCDGAVWNAFRLIERHGFFAVTLYLCCGITLLVVILALLCSITYESTGRGIRRCGS.

A signal peptide spans Met1–Gly19. Over Glu20–Gly144 the chain is Lumenal. One can recognise an Ig-like H-type domain in the interval Leu30 to Gly131. A disulfide bond links Cys39 and Cys127. Asn52 is a glycosylation site (N-linked (GlcNAc...) asparagine; by host). The helical transmembrane segment at Phe145–Leu165 threads the bilayer. Residues Leu166–Ser183 lie on the Cytoplasmic side of the membrane.

The protein belongs to the cytomegalovirus US6 family. In terms of assembly, interacts with UL18.

The protein resides in the host endoplasmic reticulum membrane. In terms of biological role, inhibits peptide loading of MHC class I molecules by transporters associated with antigen processing (TAP). Does not prevent peptide binding to TAP, but binds to the lumenal side of the TAP complex and inhibits peptide translocation by specifically blocking ATP-binding to TAP1, but not TAP2. Also prevents the conformational rearrangement of TAP induced by peptide binding. In consequence, infected cells are masked for immune recognition by cytotoxic T-lymphocytes. The chain is Unique short US6 glycoprotein (US6) from Human cytomegalovirus (strain AD169) (HHV-5).